The chain runs to 405 residues: Pentatricopeptide repeat-containing protein At3g14580, mitochondrial (405 aa).

The N-terminal 37 residues, 1–37 (MILRRLVLSATSNSNPRRSQSLSSSGVRILSSSSSDR), are a transit peptide targeting the mitochondrion. The disordered stretch occupies residues 13-44 (NSNPRRSQSLSSSGVRILSSSSSDRYTSSSQR). PPR repeat units lie at residues 94-124 (TESL…IKLE), 130-165 (SEEF…GCWP), 166-200 (SSKS…GVEI), 201-235 (DACC…KSRP), 236-270 (NVMT…RIEP), 271-305 (DTIT…GCEP), 306-340 (NPGT…GMRP), and 341-375 (SFLS…GFVP).

The protein belongs to the PPR family. P subfamily.

The protein localises to the mitochondrion. The chain is Pentatricopeptide repeat-containing protein At3g14580, mitochondrial from Arabidopsis thaliana (Mouse-ear cress).